Reading from the N-terminus, the 256-residue chain is MLIIPAIDIKEGKCVRLTRGDFSQKKIYLDNPNDMAIIWRKQNAKMLHIVDLDAALTGEMVNFEKIREIVTNLDIPVQVGGGIRSADAVKRYLDIGVGRVVIGSAAVTNPKLVEELLHTYTSSQIVVGIDAENGIPKIKGWTESSMIQDYDLALQMKEMGIERIIYTDISRDGMMQGFGYESTRRFAERAGMKITASGGVTNAEDLHRLNELQPFGVDSVIIGKALYECNFPCQELWYNFEEEISLDHNFSTARKK.

Asp8 acts as the Proton acceptor in catalysis. Asp130 serves as the catalytic Proton donor.

Belongs to the HisA/HisF family.

The protein localises to the cytoplasm. The enzyme catalyses 1-(5-phospho-beta-D-ribosyl)-5-[(5-phospho-beta-D-ribosylamino)methylideneamino]imidazole-4-carboxamide = 5-[(5-phospho-1-deoxy-D-ribulos-1-ylimino)methylamino]-1-(5-phospho-beta-D-ribosyl)imidazole-4-carboxamide. Its pathway is amino-acid biosynthesis; L-histidine biosynthesis; L-histidine from 5-phospho-alpha-D-ribose 1-diphosphate: step 4/9. The sequence is that of 1-(5-phosphoribosyl)-5-[(5-phosphoribosylamino)methylideneamino] imidazole-4-carboxamide isomerase from Pelodictyon phaeoclathratiforme (strain DSM 5477 / BU-1).